The sequence spans 108 residues: Heme-degrading monooxygenase HmoA (108 aa).

The ABM domain maps to 2–95 (FVQLRKMTVK…DYLISTEVSM (94 aa)). A heme-binding site is contributed by His76.

This sequence belongs to the antibiotic biosynthesis monooxygenase family. As to quaternary structure, homodimer.

It localises to the cytoplasm. It catalyses the reaction heme b + 3 reduced [NADPH--hemoprotein reductase] + 3 O2 = biliverdin IXalpha + CO + Fe(2+) + 3 oxidized [NADPH--hemoprotein reductase] + 3 H2O + H(+). In terms of biological role, allows bacterial pathogens to use the host heme as an iron source. Catalyzes the oxidative degradation of the heme macrocyclic porphyrin ring in the presence of a suitable electron donor such as ascorbate or NADPH--cytochrome P450 reductase, with subsequent release of free iron. The chain is Heme-degrading monooxygenase HmoA (hmoA) from Bacillus subtilis (strain 168).